We begin with the raw amino-acid sequence, 89 residues long: Cell division protein FtsL (89 aa).

At 1–22 the chain is on the cytoplasmic side; it reads MIDRKHYHLVGSIGKDILNNGK. A helical membrane pass occupies residues 23–40; sequence LPALLLIAVLASSSLVVI. At 41-89 the chain is on the periplasmic side; it reads TTYQTRRLTVEREQLLLEQNILDIEWRNLILEDNVISDQSRFEFVATEQ.

The protein belongs to the FtsL family. As to quaternary structure, part of a complex composed of FtsB, FtsL and FtsQ.

The protein resides in the cell inner membrane. Functionally, essential cell division protein. May link together the upstream cell division proteins, which are predominantly cytoplasmic, with the downstream cell division proteins, which are predominantly periplasmic. The chain is Cell division protein FtsL from Moranella endobia (strain PCIT).